The chain runs to 406 residues: Mitochondrial ribosome-associated GTPase 2 (406 aa).

The interval 15–406 (FQGVGHWALS…LGQGRQPLRW (392 aa)) is localized in the mitochondria. The interval 30–406 (KPSRLLPQRA…LGQGRQPLRW (377 aa)) is not localized in the mitochondria. Residues 70-224 (RYFVDYRRVL…RVLHLELKTV (155 aa)) form the Obg domain. The region spanning 225-390 (AHAGMVGFPN…LLLHLKVLYD (166 aa)) is the OBG-type G domain. GTP-binding positions include 231–238 (GFPNAGKS), 256–260 (FTTLK), 278–281 (DIPG), 345–348 (NKID), and 371–373 (SAL). Mg(2+) contacts are provided by S238 and T258.

It belongs to the TRAFAC class OBG-HflX-like GTPase superfamily. OBG GTPase family. Associates with the mitochondrial ribosome large subunit; the association occurs in a GTP-dependent manner. Mg(2+) is required as a cofactor.

Its subcellular location is the mitochondrion. It is found in the mitochondrion inner membrane. Plays a role in the regulation of the mitochondrial ribosome assembly and of translational activity. Displays GTPase activity. Involved in the ribosome maturation process. The sequence is that of Mitochondrial ribosome-associated GTPase 2 (MTG2) from Homo sapiens (Human).